Here is an 801-residue protein sequence, read N- to C-terminus: Phosphatidylinositol 4-phosphate 5-kinase 1 (801 aa).

The signal sequence occupies residues 1–21 (MPGLHVVSFLVVLLLQLRSSG). 8 MORN repeats span residues 41 to 63 (YVGSFDGLVPHGPGKYMWTDGAL), 64 to 86 (YDGEWDKSKMTGRGLIQWPSGAS), 87 to 109 (YEGDFRGGFIDGAGTFKGVDGSV), 110 to 132 (YKGSWRMNKKHGMGTMVYSNSDT), 133 to 155 (YEGFWNEGLPDEFGKYTWADGNV), 156 to 178 (YIGRWKSGKMNGSGVMQWINGDT), 182 to 201 (NWLNGLAHGKGYCKYASGAC), and 202 to 223 (YIGTWDRGLKDGHGTFYQPGSK). Residues 366–797 (GHRSYYLMLN…RFISFLEKVF (432 aa)) enclose the PIPK domain.

In terms of tissue distribution, expressed in young seedlings, shoot and seeds, and at lower level in roots, stem and leaf.

The enzyme catalyses a 1,2-diacyl-sn-glycero-3-phospho-(1D-myo-inositol 4-phosphate) + ATP = a 1,2-diacyl-sn-glycero-3-phospho-(1D-myo-inositol-4,5-bisphosphate) + ADP + H(+). Functionally, involved in flowering. May suppress floral initiation by modifying the expression of genes related to floral induction. The protein is Phosphatidylinositol 4-phosphate 5-kinase 1 (PIPK1) of Oryza sativa subsp. japonica (Rice).